The primary structure comprises 361 residues: MPLKLALPRSTTPKDPARCTLDIRMESPPLVFLGSPETSSGALASGILKLTILHQPFIKVHTLKLQLIKRITVLHPAISHCSACAGSKEVLQTWDLAANTTYRPGTQHWPFSWLFPGSLPASVSNRYIKLEYYLEATLCYGTPEGGISPSKPEVLKFPLQLKRAAIPSPDTIHKRIFPPTNLVANITLPSTLHPHGAALMEVTMTGFAQNDGNDWKINRVTWRLEEHMQFSCQPCERHRDLVKPRPIEEKRILSTQDLQSGWKFIDNQMFLSTQINTSSLREPSCDVEIPAPFSLKVSHHLIFETIVNRKKNVAGNNMGNARILRVSVVQPLTTPAGLGISWDEECPPVFESVGPAPPAYT.

T12 is subject to Phosphothreonine.

The protein resides in the cytoplasm. It is found in the nucleus. This is an uncharacterized protein from Schizosaccharomyces pombe (strain 972 / ATCC 24843) (Fission yeast).